Consider the following 843-residue polypeptide: Taste receptor type 1 member 2 (843 aa).

The signal sequence occupies residues Met1 to Pro19. The Extracellular portion of the chain corresponds to Lys20–Thr570. 9 N-linked (GlcNAc...) asparagine glycosylation sites follow: Asn87, Asn296, Asn316, Asn355, Asn372, Asn432, Asn484, Asn491, and Asn531. The chain crosses the membrane as a helical span at residues Ile571 to Phe591. Residues Trp592–Pro606 lie on the Cytoplasmic side of the membrane. A helical transmembrane segment spans residues Met607–Gly627. Topologically, residues Pro628 to Thr642 are extracellular. The helical transmembrane segment at Val643 to Phe663 threads the bilayer. The Cytoplasmic segment spans residues Lys664–Pro682. The chain crosses the membrane as a helical span at residues Tyr683–Ala703. Over Thr704–Gly731 the chain is Extracellular. Residues Leu732 to Met752 form a helical membrane-spanning segment. Over Gly753 to Lys764 the chain is Cytoplasmic. Residues Phe765–Ser785 traverse the membrane as a helical segment. Residues Val786–Gly789 are Extracellular-facing. A helical membrane pass occupies residues Val790 to Gly810. Topologically, residues Tyr811–Ser843 are cytoplasmic.

The protein belongs to the G-protein coupled receptor 3 family. TAS1R subfamily. In terms of assembly, forms heterodimers with TAS1R3. Abundantly expressed in circumvallate and foliate papillae.

The protein resides in the cell membrane. Putative taste receptor. TAS1R2/TAS1R3 recognizes diverse natural and synthetic sweeteners. This chain is Taste receptor type 1 member 2 (Tas1r2), found in Rattus norvegicus (Rat).